We begin with the raw amino-acid sequence, 64 residues long: Large ribosomal subunit protein bL35 (64 aa).

Residues 1–31 are disordered; the sequence is MPKMKTHSGAKKRFKLTGTGKLKRQQANRRH.

This sequence belongs to the bacterial ribosomal protein bL35 family.

The sequence is that of Large ribosomal subunit protein bL35 from Paenarthrobacter aurescens (strain TC1).